The primary structure comprises 312 residues: MDNNEILLANPRGFCAGVERAIEIVERALQRFGAPIYVRHEVVHNKFVVDDLRAKGAVFVEELDEVPTGNTVIFSAHGVSQAVREEADKRGLRVFDATCPLVTKVHIEVGRMREQGRELVMIGHKGHPEVEGTMGQVKDGIHLVETAADVANLQVADPDKLAYVTQTTLSVDDAAAIVTALRERFPNIMGPKKDDICYATQNRQDAVKFMTPHADVVFVVGSKNSSNSNRLREVAELRGVPAYLVDNAAGIDPAWIVGKRRIGVTAGASAPEVLVAEVIERLKALSGASVRNLDGVPEKVTFPLPKELQEAR.

Residue Cys-15 participates in [4Fe-4S] cluster binding. (2E)-4-hydroxy-3-methylbut-2-enyl diphosphate is bound by residues His-44 and His-77. Residues His-44 and His-77 each coordinate dimethylallyl diphosphate. Positions 44 and 77 each coordinate isopentenyl diphosphate. Cys-99 contributes to the [4Fe-4S] cluster binding site. His-127 lines the (2E)-4-hydroxy-3-methylbut-2-enyl diphosphate pocket. Residue His-127 coordinates dimethylallyl diphosphate. His-127 serves as a coordination point for isopentenyl diphosphate. Residue Glu-129 is the Proton donor of the active site. Thr-167 is a binding site for (2E)-4-hydroxy-3-methylbut-2-enyl diphosphate. Cys-197 contacts [4Fe-4S] cluster. 4 residues coordinate (2E)-4-hydroxy-3-methylbut-2-enyl diphosphate: Ser-225, Ser-226, Asn-227, and Ser-269. Dimethylallyl diphosphate is bound by residues Ser-225, Ser-226, Asn-227, and Ser-269. Isopentenyl diphosphate is bound by residues Ser-225, Ser-226, Asn-227, and Ser-269.

The protein belongs to the IspH family. [4Fe-4S] cluster is required as a cofactor.

The enzyme catalyses isopentenyl diphosphate + 2 oxidized [2Fe-2S]-[ferredoxin] + H2O = (2E)-4-hydroxy-3-methylbut-2-enyl diphosphate + 2 reduced [2Fe-2S]-[ferredoxin] + 2 H(+). The catalysed reaction is dimethylallyl diphosphate + 2 oxidized [2Fe-2S]-[ferredoxin] + H2O = (2E)-4-hydroxy-3-methylbut-2-enyl diphosphate + 2 reduced [2Fe-2S]-[ferredoxin] + 2 H(+). It participates in isoprenoid biosynthesis; dimethylallyl diphosphate biosynthesis; dimethylallyl diphosphate from (2E)-4-hydroxy-3-methylbutenyl diphosphate: step 1/1. The protein operates within isoprenoid biosynthesis; isopentenyl diphosphate biosynthesis via DXP pathway; isopentenyl diphosphate from 1-deoxy-D-xylulose 5-phosphate: step 6/6. Functionally, catalyzes the conversion of 1-hydroxy-2-methyl-2-(E)-butenyl 4-diphosphate (HMBPP) into a mixture of isopentenyl diphosphate (IPP) and dimethylallyl diphosphate (DMAPP). Acts in the terminal step of the DOXP/MEP pathway for isoprenoid precursor biosynthesis. The sequence is that of 4-hydroxy-3-methylbut-2-enyl diphosphate reductase from Azoarcus sp. (strain BH72).